We begin with the raw amino-acid sequence, 1077 residues long: ATP-dependent helicase/deoxyribonuclease subunit B (1077 aa).

The protein belongs to the helicase family. AddB/RexB type 2 subfamily. As to quaternary structure, heterodimer of AddA and RexB. It depends on Mg(2+) as a cofactor.

Its function is as follows. The heterodimer acts as both an ATP-dependent DNA helicase and an ATP-dependent, dual-direction single-stranded exonuclease. Recognizes the chi site generating a DNA molecule suitable for the initiation of homologous recombination. This subunit has 5' -&gt; 3' nuclease activity but not helicase activity. The protein is ATP-dependent helicase/deoxyribonuclease subunit B of Streptococcus agalactiae serotype Ia (strain ATCC 27591 / A909 / CDC SS700).